The chain runs to 429 residues: Putative GMP synthase [glutamine-hydrolyzing] (429 aa).

In terms of domain architecture, Glutamine amidotransferase type-1 spans 10–118 (TIFILDFGSQ…GYTPIHLYPC (109 aa)). The Nucleophile role is filled by Cys87. The 186-residue stretch at 119-304 (ELFKHIVDCE…LGLSSYLLDR (186 aa)) folds into the GMPS ATP-PPase domain. Active-site residues include His176 and Glu178.

In terms of assembly, homodimer.

It catalyses the reaction XMP + L-glutamine + ATP + H2O = GMP + L-glutamate + AMP + diphosphate + 2 H(+). It participates in purine metabolism; GMP biosynthesis; GMP from XMP (L-Gln route): step 1/1. In terms of biological role, catalyzes the synthesis of GMP from XMP. The protein is Putative GMP synthase [glutamine-hydrolyzing] (guaA) of Chlamydia pneumoniae (Chlamydophila pneumoniae).